A 239-amino-acid chain; its full sequence is Ankyrin repeat domain-containing protein 49 (239 aa).

Position 49 is a phosphoserine (serine 49). ANK repeat units follow at residues 73 to 103 (DPSR…HVNT), 107 to 136 (DEYT…DVHA), 140 to 169 (DGWT…DINA), and 173 to 206 (GLLT…GLKN).

As to expression, widely expressed in fetus, at a high level in fetal liver, brain and lung.

It localises to the nucleus. In terms of biological role, induces HBG1 expression. May have a role in spermatogenesis where it promotes autophagy in response to serum starvation, via the NF-kappaB pathway. The protein is Ankyrin repeat domain-containing protein 49 (ANKRD49) of Homo sapiens (Human).